The sequence spans 731 residues: Ubiquitin carboxyl-terminal hydrolase 17 (731 aa).

Residues cysteine 57, cysteine 60, cysteine 68, cysteine 71, cysteine 77, cysteine 81, histidine 90, and cysteine 94 each coordinate Zn(2+). The segment at 57 to 94 (CAVCLYPTTTRCSQCKSVRYCSSKCQILHWRRGHKEEC) adopts an MYND-type zinc-finger fold. Disordered regions lie at residues 171–219 (YETR…DSAN) and 262–281 (LPSKANSKPKVSQASSSGLK). Composition is skewed to polar residues over residues 207–219 (GNQNSRRSGDSAN) and 265–281 (KANSKPKVSQASSSGLK). Residues 329–633 (FGLVNLGNSC…GAYMLLYARD (305 aa)) form the USP domain. Cysteine 338 (nucleophile) is an active-site residue. Histidine 592 acts as the Proton acceptor in catalysis. Residues 637-702 (PVSKNGGRKS…TSSCSTKDSS (66 aa)) form a disordered region. The span at 677–701 (DWSSGSLSSMFSSSDTTSSCSTKDS) shows a compositional bias: low complexity.

It belongs to the peptidase C19 family.

It catalyses the reaction Thiol-dependent hydrolysis of ester, thioester, amide, peptide and isopeptide bonds formed by the C-terminal Gly of ubiquitin (a 76-residue protein attached to proteins as an intracellular targeting signal).. Its function is as follows. Recognizes and hydrolyzes the peptide bond at the C-terminal Gly of ubiquitin. Involved in the processing of poly-ubiquitin precursors as well as that of ubiquitinated proteins. The chain is Ubiquitin carboxyl-terminal hydrolase 17 (UBP17) from Arabidopsis thaliana (Mouse-ear cress).